We begin with the raw amino-acid sequence, 501 residues long: MPSANASRKGQEKPREIVDAAEDYAKERYGVSSMIQSQEKPDRVLVRVKDLTVQKADEVVWVRARVHTSRAKGKQCFLVLRQQQFNVQALVAVGDHASKQMVKFAANINKESIIDVEGIVRKVNQKIGSCTQQDVELHVQKIYVISLAEPRLPLQLDDAIRPEVEGEEDGRATVNQDTRLDNRIIDLRTSTSQAIFHLQSGICHLFRETLINKGFVEIQTPKIISAASEGGANVFTVSYFKSNAYLAQSPQLYKQMCICADFEKVFCIGPVFRAEDSNTHRHLTEFVGLDIEMAFNYHYHEVVEEIADTLVQIFKGLQERFQTEIQTVNKQFPCEPFKFLEPTLRLEYCEALAMLREAGVEMDDEEDLSTPNEKLLGRLVKEKYDTDFYVLDKYPLAVRPFYTMPDPRNPKQSNSYDMFMRGEEILSGAQRIHDPQLLTERALHHGIDLEKIKAYIDSFRFGAPPHAGGGIGLERVTMLFLGLHNVRQTSMFPRDPKRLTP.

At threonine 52 the chain carries Phosphothreonine. Position 74 is an N6-acetyllysine (lysine 74). Residue glutamate 229 coordinates L-aspartate. Serine 249 is subject to Phosphoserine. The segment at 251 to 254 (QLYK) is aspartate. Arginine 273 is an L-aspartate binding site. ATP-binding positions include 273–275 (RAE) and 281–283 (RHL). Lysine 374 carries the N6-acetyllysine modification. Glutamate 424 contacts ATP. L-aspartate is bound by residues serine 427 and arginine 431. 472 to 475 (GLER) serves as a coordination point for ATP.

This sequence belongs to the class-II aminoacyl-tRNA synthetase family. Type 2 subfamily. In terms of assembly, homodimer. Part of a multisubunit complex that groups tRNA ligases for Arg (RARS1), Asp (DARS1), Gln (QARS1), Ile (IARS1), Leu (LARS1), Lys (KARS1), Met (MARS1) the bifunctional ligase for Glu and Pro (EPRS1) and the auxiliary subunits AIMP1/p43, AIMP2/p38 and EEF1E1/p18.

It is found in the cytoplasm. It catalyses the reaction tRNA(Asp) + L-aspartate + ATP = L-aspartyl-tRNA(Asp) + AMP + diphosphate. Functionally, catalyzes the specific attachment of an amino acid to its cognate tRNA in a 2 step reaction: the amino acid (AA) is first activated by ATP to form AA-AMP and then transferred to the acceptor end of the tRNA. In Rattus norvegicus (Rat), this protein is Aspartate--tRNA ligase, cytoplasmic (Dars1).